We begin with the raw amino-acid sequence, 101 residues long: MVYAIVKAGGRQEKVSVGDIVVVDRVGGEVGDTIELTPILLVDGDKVTNGKDLADVRVSAEIVRPEKGPKITILKFKNKTGYRKRQGHRQKLTRLKVTDIA.

The protein belongs to the bacterial ribosomal protein bL21 family. In terms of assembly, part of the 50S ribosomal subunit. Contacts protein L20.

This protein binds to 23S rRNA in the presence of protein L20. This Beutenbergia cavernae (strain ATCC BAA-8 / DSM 12333 / CCUG 43141 / JCM 11478 / NBRC 16432 / NCIMB 13614 / HKI 0122) protein is Large ribosomal subunit protein bL21.